We begin with the raw amino-acid sequence, 201 residues long: Peptide deformylase (201 aa).

The Fe cation site is built by Cys-114 and His-156. Glu-157 is a catalytic residue. His-160 is a Fe cation binding site.

This sequence belongs to the polypeptide deformylase family. Fe(2+) serves as cofactor.

The catalysed reaction is N-terminal N-formyl-L-methionyl-[peptide] + H2O = N-terminal L-methionyl-[peptide] + formate. In terms of biological role, removes the formyl group from the N-terminal Met of newly synthesized proteins. Requires at least a dipeptide for an efficient rate of reaction. N-terminal L-methionine is a prerequisite for activity but the enzyme has broad specificity at other positions. The sequence is that of Peptide deformylase from Tropheryma whipplei (strain TW08/27) (Whipple's bacillus).